Reading from the N-terminus, the 573-residue chain is Proline--tRNA ligase (573 aa).

This sequence belongs to the class-II aminoacyl-tRNA synthetase family. ProS type 1 subfamily. In terms of assembly, homodimer.

It localises to the cytoplasm. It catalyses the reaction tRNA(Pro) + L-proline + ATP = L-prolyl-tRNA(Pro) + AMP + diphosphate. Catalyzes the attachment of proline to tRNA(Pro) in a two-step reaction: proline is first activated by ATP to form Pro-AMP and then transferred to the acceptor end of tRNA(Pro). As ProRS can inadvertently accommodate and process non-cognate amino acids such as alanine and cysteine, to avoid such errors it has two additional distinct editing activities against alanine. One activity is designated as 'pretransfer' editing and involves the tRNA(Pro)-independent hydrolysis of activated Ala-AMP. The other activity is designated 'posttransfer' editing and involves deacylation of mischarged Ala-tRNA(Pro). The misacylated Cys-tRNA(Pro) is not edited by ProRS. The polypeptide is Proline--tRNA ligase (Cupriavidus taiwanensis (strain DSM 17343 / BCRC 17206 / CCUG 44338 / CIP 107171 / LMG 19424 / R1) (Ralstonia taiwanensis (strain LMG 19424))).